A 534-amino-acid chain; its full sequence is Cytochrome c oxidase subunit 1 (534 aa).

A helical transmembrane segment spans residues 16–36; sequence VLYFIFSVFCGMAGTGMSMII. Ca(2+)-binding residues include Glu-39 and Gly-44. His-62 provides a ligand contact to Fe(II)-heme a. Helical transmembrane passes span 64-84, 101-121, 147-167, 183-203, 235-255, and 267-287; these read ILMV…NYLL, ISFW…LVES, AIFA…NFIV, PLFV…LPVL, LFWF…FGVI, and VFGE…GFLV. Residue His-241 coordinates Cu cation. Positions 241–245 form a cross-link, 1'-histidyl-3'-tyrosine (His-Tyr); it reads HPEVY. Position 245 (Tyr-245) interacts with O2. Cu cation contacts are provided by His-290 and His-291. Helical transmembrane passes span 310-330 and 338-358; these read MIIA…IYGG and MMYA…GVAL. Positions 368 and 369 each coordinate Mg(2+). The next 2 helical transmembrane spans lie at 372-392 and 414-434; these read YVVA…MFAG and FWLI…LGIN. His-376 is a heme a3 binding site. His-378 contacts Fe(II)-heme a. A Ca(2+)-binding site is contributed by Pro-441. Residues 453–473 form a helical membrane-spanning segment; it reads VSSIGSFIAMISLILFIYILF.

This sequence belongs to the heme-copper respiratory oxidase family. Component of the cytochrome c oxidase (complex IV, CIV), a multisubunit enzyme composed of a catalytic core of 3 subunits and several supernumerary subunits. The complex exists as a monomer or a dimer and forms supercomplexes (SCs) in the inner mitochondrial membrane with ubiquinol-cytochrome c oxidoreductase (cytochrome b-c1 complex, complex III, CIII). Heme is required as a cofactor. Cu cation serves as cofactor.

It localises to the mitochondrion inner membrane. The enzyme catalyses 4 Fe(II)-[cytochrome c] + O2 + 8 H(+)(in) = 4 Fe(III)-[cytochrome c] + 2 H2O + 4 H(+)(out). It functions in the pathway energy metabolism; oxidative phosphorylation. In terms of biological role, component of the cytochrome c oxidase, the last enzyme in the mitochondrial electron transport chain which drives oxidative phosphorylation. The respiratory chain contains 3 multisubunit complexes succinate dehydrogenase (complex II, CII), ubiquinol-cytochrome c oxidoreductase (cytochrome b-c1 complex, complex III, CIII) and cytochrome c oxidase (complex IV, CIV), that cooperate to transfer electrons derived from NADH and succinate to molecular oxygen, creating an electrochemical gradient over the inner membrane that drives transmembrane transport and the ATP synthase. Cytochrome c oxidase is the component of the respiratory chain that catalyzes the reduction of oxygen to water. Electrons originating from reduced cytochrome c in the intermembrane space (IMS) are transferred via the dinuclear copper A center (CU(A)) of subunit 2 and heme A of subunit 1 to the active site in subunit 1, a binuclear center (BNC) formed by heme A3 and copper B (CU(B)). The BNC reduces molecular oxygen to 2 water molecules using 4 electrons from cytochrome c in the IMS and 4 protons from the mitochondrial matrix. The polypeptide is Cytochrome c oxidase subunit 1 (COX1) (Vanderwaltozyma polyspora (strain ATCC 22028 / DSM 70294 / BCRC 21397 / CBS 2163 / NBRC 10782 / NRRL Y-8283 / UCD 57-17) (Kluyveromyces polysporus)).